The primary structure comprises 357 residues: Holliday junction branch migration complex subunit RuvB (357 aa).

Positions 1 to 15 (MAIQSDSLSSLPDSP) are enriched in low complexity. The segment at 1-30 (MAIQSDSLSSLPDSPRIVAPQPVSPNEESI) is disordered. The interval 13-195 (DSPRIVAPQP…FGIVSRLEFY (183 aa)) is large ATPase domain (RuvB-L). ATP is bound by residues leucine 34, arginine 35, glycine 76, lysine 79, threonine 80, threonine 81, 142–144 (EDF), arginine 185, tyrosine 195, and arginine 232. Residue threonine 80 participates in Mg(2+) binding. The small ATPAse domain (RuvB-S) stretch occupies residues 196–266 (NTDELARIVT…AAGRALAMLD (71 aa)). Positions 269–357 (PQGLDVMDRK…SGGTGELFSK (89 aa)) are head domain (RuvB-H). Residues arginine 305, arginine 324, and arginine 329 each coordinate DNA.

Belongs to the RuvB family. As to quaternary structure, homohexamer. Forms an RuvA(8)-RuvB(12)-Holliday junction (HJ) complex. HJ DNA is sandwiched between 2 RuvA tetramers; dsDNA enters through RuvA and exits via RuvB. An RuvB hexamer assembles on each DNA strand where it exits the tetramer. Each RuvB hexamer is contacted by two RuvA subunits (via domain III) on 2 adjacent RuvB subunits; this complex drives branch migration. In the full resolvosome a probable DNA-RuvA(4)-RuvB(12)-RuvC(2) complex forms which resolves the HJ.

Its subcellular location is the cytoplasm. It carries out the reaction ATP + H2O = ADP + phosphate + H(+). The RuvA-RuvB-RuvC complex processes Holliday junction (HJ) DNA during genetic recombination and DNA repair, while the RuvA-RuvB complex plays an important role in the rescue of blocked DNA replication forks via replication fork reversal (RFR). RuvA specifically binds to HJ cruciform DNA, conferring on it an open structure. The RuvB hexamer acts as an ATP-dependent pump, pulling dsDNA into and through the RuvAB complex. RuvB forms 2 homohexamers on either side of HJ DNA bound by 1 or 2 RuvA tetramers; 4 subunits per hexamer contact DNA at a time. Coordinated motions by a converter formed by DNA-disengaged RuvB subunits stimulates ATP hydrolysis and nucleotide exchange. Immobilization of the converter enables RuvB to convert the ATP-contained energy into a lever motion, pulling 2 nucleotides of DNA out of the RuvA tetramer per ATP hydrolyzed, thus driving DNA branch migration. The RuvB motors rotate together with the DNA substrate, which together with the progressing nucleotide cycle form the mechanistic basis for DNA recombination by continuous HJ branch migration. Branch migration allows RuvC to scan DNA until it finds its consensus sequence, where it cleaves and resolves cruciform DNA. The chain is Holliday junction branch migration complex subunit RuvB from Bordetella bronchiseptica (strain ATCC BAA-588 / NCTC 13252 / RB50) (Alcaligenes bronchisepticus).